The chain runs to 417 residues: Serine hydroxymethyltransferase (417 aa).

Residues Leu112 and 116 to 118 (GHL) each bind (6S)-5,6,7,8-tetrahydrofolate. Lys221 is modified (N6-(pyridoxal phosphate)lysine). (6S)-5,6,7,8-tetrahydrofolate is bound at residue Glu247.

The protein belongs to the SHMT family. As to quaternary structure, homodimer. Pyridoxal 5'-phosphate is required as a cofactor.

It localises to the cytoplasm. It catalyses the reaction (6R)-5,10-methylene-5,6,7,8-tetrahydrofolate + glycine + H2O = (6S)-5,6,7,8-tetrahydrofolate + L-serine. Its pathway is one-carbon metabolism; tetrahydrofolate interconversion. It participates in amino-acid biosynthesis; glycine biosynthesis; glycine from L-serine: step 1/1. In terms of biological role, catalyzes the reversible interconversion of serine and glycine with tetrahydrofolate (THF) serving as the one-carbon carrier. This reaction serves as the major source of one-carbon groups required for the biosynthesis of purines, thymidylate, methionine, and other important biomolecules. Also exhibits THF-independent aldolase activity toward beta-hydroxyamino acids, producing glycine and aldehydes, via a retro-aldol mechanism. This chain is Serine hydroxymethyltransferase, found in Borrelia turicatae (strain 91E135).